Consider the following 1024-residue polypeptide: MIMITDSLAVVLQRRDWENPGVTQLNRLAAHPPFASWRNSEEARTDRPSQQLRSLNGEWRFAWFPAPEAVPESWLECDLPEADTVVVPSNWQMHGYDAPIYTNVTYPITVNPPFVPAENPTGCYSLTFNIDESWLQEGQTRIIFDGVNSAFHLWCNGRWVGYGQDSRLPSEFDLSAFLRAGKNRLAVMVLRWSDGSYLEDQDMWRMSGIFRDVSLLHKPSTQISDFHVATHFNDDFSRAVLEAEVQMYGELRDELRVTVSLWQGETQVASGTAPFGGEIIDERGGYADRVTLRLNVENPALWSAEIPNLYRAVVELHTDDGTLIEAEACDVGFREVRIENGLLLLNGKPLLIRGVNRHEHHPLHGQVMDEQTMVQDILLMKQNNFNAVRCSHYPNHPLWYTLCDRFGLYVVDEANIETHGMVPMNRLTDDPRWLPAMSERVTRMVQRDRNHPSVIIWSLGNESGHGANHDALYRWIKSVDPSRPVQYEGGGADTTATDIICPMYARVDEDQPFPAVPKWSIKKWLSLPGETRPLILCEYAHAMGNSLGGFAKYWQAFRQYPRLQGGFVWDWVDQSLIKYDENGNPWSAYGGDFGDTPNDRQFCMNGLVFADRTPHPALTEAKHQQQFFQFRLSGQTIEVTSEYLFRHSDNELLHWSVALDGKPLASGEMPLDVAPQDKQLIELPELPQPESAGQLWLTVHVVQPNATAWSEAGHISAWQQWRLAENLSVTLPAAPHAIPQLTTSETDFCIELGNKRWQFNRQSGFLSQMWIGAEKQLLTPLRDQFTRAPLDNDIGVSEATRIDPNAWVERWKAAGHYQAEAALLQCTADTLADAVLITTAHAWQHQGKTLFISRKTYRIDGSGQMAITVDVEVASDTPHPARIGLTCQLAQVAERVNWLGLGPQENYPDRLTAACFDRWDLPLSDMYTPYVFPSENGLRCGTRELNYGPHQWRGDFQFNISRYSQQQLMETSHRHLLHAEEGTWLNIDGFHMGIGGDDSWSPSVSAEFQLSAGSYHYQLVWCQK.

Asn103 and Asp202 together coordinate substrate. Na(+) is bound at residue Asp202. The Mg(2+) site is built by Glu417, His419, and Glu462. Residues Glu462 and 538–541 contribute to the substrate site; that span reads EYAH. Residue Glu462 is the Proton donor of the active site. Glu538 acts as the Nucleophile in catalysis. Residue Asn598 participates in Mg(2+) binding. Na(+) contacts are provided by Phe602 and Asn605. 2 residues coordinate substrate: Asn605 and Trp1000.

It belongs to the glycosyl hydrolase 2 family. In terms of assembly, homotetramer. The cofactor is Mg(2+). Na(+) serves as cofactor.

The enzyme catalyses Hydrolysis of terminal non-reducing beta-D-galactose residues in beta-D-galactosides.. The chain is Beta-galactosidase from Shigella sonnei (strain Ss046).